Reading from the N-terminus, the 536-residue chain is CTP synthase (536 aa).

An amidoligase domain region spans residues 1-267 (MSKFVFVTGG…CKETLKYLEL (267 aa)). Serine 13 contacts CTP. Serine 13 provides a ligand contact to UTP. ATP is bound by residues 14-19 (SIGKGI) and aspartate 71. Residues aspartate 71 and glutamate 141 each coordinate Mg(2+). CTP-binding positions include 148–150 (DIE), 188–193 (KTKPTQ), and lysine 224. UTP-binding positions include 188-193 (KTKPTQ) and lysine 224. A Glutamine amidotransferase type-1 domain is found at 292-534 (KVALVGKYIE…IKASQEKLTQ (243 aa)). Glycine 354 contributes to the L-glutamine binding site. The active-site Nucleophile; for glutamine hydrolysis is the cysteine 381. L-glutamine contacts are provided by residues 382–385 (LGMQ), glutamate 405, and arginine 462. Active-site residues include histidine 507 and glutamate 509.

This sequence belongs to the CTP synthase family. As to quaternary structure, homotetramer.

It carries out the reaction UTP + L-glutamine + ATP + H2O = CTP + L-glutamate + ADP + phosphate + 2 H(+). The catalysed reaction is L-glutamine + H2O = L-glutamate + NH4(+). The enzyme catalyses UTP + NH4(+) + ATP = CTP + ADP + phosphate + 2 H(+). Its pathway is pyrimidine metabolism; CTP biosynthesis via de novo pathway; CTP from UDP: step 2/2. Its activity is regulated as follows. Allosterically activated by GTP, when glutamine is the substrate; GTP has no effect on the reaction when ammonia is the substrate. The allosteric effector GTP functions by stabilizing the protein conformation that binds the tetrahedral intermediate(s) formed during glutamine hydrolysis. Inhibited by the product CTP, via allosteric rather than competitive inhibition. Functionally, catalyzes the ATP-dependent amination of UTP to CTP with either L-glutamine or ammonia as the source of nitrogen. Regulates intracellular CTP levels through interactions with the four ribonucleotide triphosphates. The chain is CTP synthase from Prochlorococcus marinus (strain MIT 9215).